A 418-amino-acid chain; its full sequence is Gamma-glutamyl phosphate reductase (418 aa).

Belongs to the gamma-glutamyl phosphate reductase family.

It localises to the cytoplasm. It carries out the reaction L-glutamate 5-semialdehyde + phosphate + NADP(+) = L-glutamyl 5-phosphate + NADPH + H(+). The protein operates within amino-acid biosynthesis; L-proline biosynthesis; L-glutamate 5-semialdehyde from L-glutamate: step 2/2. Functionally, catalyzes the NADPH-dependent reduction of L-glutamate 5-phosphate into L-glutamate 5-semialdehyde and phosphate. The product spontaneously undergoes cyclization to form 1-pyrroline-5-carboxylate. The sequence is that of Gamma-glutamyl phosphate reductase from Halothermothrix orenii (strain H 168 / OCM 544 / DSM 9562).